The chain runs to 778 residues: Kin of IRRE-like protein 3 (778 aa).

A signal peptide spans 1 to 21; it reads MRPFQLDLLFLCFFLFSQELG. The Extracellular segment spans residues 22-535; the sequence is LQKRGCCLVL…GLEAESVPMA (514 aa). Ig-like C2-type domains follow at residues 48–142, 147–243, 249–330, 335–415, and 419–515; these read YSFS…ARLT, PDDP…TSVT, PPLV…RTVD, PRMT…VTLT, and PPII…IRLK. A disulfide bridge connects residues Cys69 and Cys127. Asn167 carries N-linked (GlcNAc...) asparagine glycosylation. A disulfide bridge connects residues Cys170 and Cys227. A glycan (N-linked (GlcNAc...) asparagine) is linked at Asn253. Residues Cys271 and Cys314 are joined by a disulfide bond. The N-linked (GlcNAc...) asparagine glycan is linked to Asn324. Cystine bridges form between Cys356–Cys398 and Cys440–Cys499. N-linked (GlcNAc...) asparagine glycosylation is present at Asn498. The chain crosses the membrane as a helical span at residues 536-556; that stretch reads VIIGVAVGAGVAFLVLMATIV. Residues 557–778 are Cytoplasmic-facing; that stretch reads AFCCARSQRN…PLQRRMQTHV (222 aa). Positions 727–736 are enriched in polar residues; that stretch reads CDSSVSSSGK. Residues 727–778 are disordered; the sequence is CDSSVSSSGKQDGYVQFDKASKASASSSHHSQSSSQNSDPSRPLQRRMQTHV. Low complexity predominate over residues 748–762; the sequence is KASASSSHHSQSSSQ.

It belongs to the immunoglobulin superfamily. In terms of assembly, homodimer; mediates homophilic interactions to promote cell adhesion. Interacts with NPHS1; forms heterodimers with NPHS1. Interacts with NPHS2/podocin (via the C-terminus). Interacts with CASK. Interacts (via extracellular region) with MAP1B. Interacts (via extracellular region) with MYO16. Interacts (via intracellular region) with ATP1B1. Interacts (via intracellular region) with SHMT2. Interacts (via intracellular region) with UFC1. In terms of processing, undergoes proteolysis by a metalloprotease and gives rise to a soluble form. As to expression, expressed mainly in adult brain, bone marrow and stromal cells. Expressed in diverse regions of the brain, including the cortex, hippocampus, striatum, olfactory bulb and cerebellum. In brain, expressed in pontine nucleus neurons (at protein level). In hippocampus, produced in both the dentate granule neurons and the GABAergic neurons, but not the CA3 neurons. Expressed in subpopulations of vomeronasal sensory neurons. Expressed in a subset of neurons in dorsal root ganglia.

The protein localises to the cell membrane. It is found in the cell projection. It localises to the axon. Its subcellular location is the dendrite. The protein resides in the secreted. Synaptic adhesion molecule required for the formation of target-specific synapses. Required for formation of target-specific synapses at hippocampal mossy fiber synapses. Required for formation of mossy fiber filopodia, the synaptic structures connecting dentate granule and GABA neurons. Probably acts as a homophilic adhesion molecule that promotes trans-cellular interactions and stabilize mossy fiber filipodia contact and subsequent synapse formation. Required for the coalescence of vomeronasal sensory neuron axons. May be involved in the hematopoietic supportive capacity of stroma cells; the secreted extracellular domain is directly responsible for supporting hematopoietic stem cells. The polypeptide is Kin of IRRE-like protein 3 (Kirrel3) (Mus musculus (Mouse)).